A 317-amino-acid chain; its full sequence is Transaldolase (317 aa).

K132 acts as the Schiff-base intermediate with substrate in catalysis.

Belongs to the transaldolase family. Type 1 subfamily. As to quaternary structure, homodimer.

Its subcellular location is the cytoplasm. It carries out the reaction D-sedoheptulose 7-phosphate + D-glyceraldehyde 3-phosphate = D-erythrose 4-phosphate + beta-D-fructose 6-phosphate. The protein operates within carbohydrate degradation; pentose phosphate pathway; D-glyceraldehyde 3-phosphate and beta-D-fructose 6-phosphate from D-ribose 5-phosphate and D-xylulose 5-phosphate (non-oxidative stage): step 2/3. Its function is as follows. Transaldolase is important for the balance of metabolites in the pentose-phosphate pathway. This is Transaldolase from Shewanella amazonensis (strain ATCC BAA-1098 / SB2B).